We begin with the raw amino-acid sequence, 461 residues long: Chromosomal replication initiator protein DnaA (461 aa).

The interval 1 to 87 (MAVSLWQQCI…IGSRPSAKPV (87 aa)) is domain I, interacts with DnaA modulators. Residues 87-124 (VVQATAAIRPKPAASKAVEKPTFNAPQAEPAITANHRS) are domain II. A domain III, AAA+ region region spans residues 125-341 (NINPTYQFDN…GALNRVIANA (217 aa)). The ATP site is built by Gly-169, Gly-171, Lys-172, and Thr-173. Residues 342-461 (NFTGRPITID…YANLIRTLSS (120 aa)) are domain IV, binds dsDNA.

The protein belongs to the DnaA family. In terms of assembly, oligomerizes as a right-handed, spiral filament on DNA at oriC.

It is found in the cytoplasm. Plays an essential role in the initiation and regulation of chromosomal replication. ATP-DnaA binds to the origin of replication (oriC) to initiate formation of the DNA replication initiation complex once per cell cycle. Binds the DnaA box (a 9 base pair repeat at the origin) and separates the double-stranded (ds)DNA. Forms a right-handed helical filament on oriC DNA; dsDNA binds to the exterior of the filament while single-stranded (ss)DNA is stabiized in the filament's interior. The ATP-DnaA-oriC complex binds and stabilizes one strand of the AT-rich DNA unwinding element (DUE), permitting loading of DNA polymerase. After initiation quickly degrades to an ADP-DnaA complex that is not apt for DNA replication. Binds acidic phospholipids. This chain is Chromosomal replication initiator protein DnaA, found in Shewanella piezotolerans (strain WP3 / JCM 13877).